The primary structure comprises 123 residues: Large ribosomal subunit protein uL24 (123 aa).

The protein belongs to the universal ribosomal protein uL24 family. As to quaternary structure, part of the 50S ribosomal subunit.

One of two assembly initiator proteins, it binds directly to the 5'-end of the 23S rRNA, where it nucleates assembly of the 50S subunit. Functionally, located at the polypeptide exit tunnel on the outside of the subunit. This chain is Large ribosomal subunit protein uL24, found in Pyrobaculum islandicum (strain DSM 4184 / JCM 9189 / GEO3).